We begin with the raw amino-acid sequence, 347 residues long: MKPPILIAILATVMTGTMIVMLSSHWLLIWIGFEMNMLAIIPILMKKFNPRAMEASTKYFLTQATASMLLMMGVTINLLYSGQWMISKVSNPAASTMMTIALTMKLGLSPFHFWVPEVTQGISLSSGMILLTWQKIAPMSVLYQISPSINTDLMTLVALASVLVGGWGGLNQTQLRKIMAYSSIAHMGWMAAIIIYNPTMMFLNLSLYILMTLSTFMLFMLSASTTTLSLSHTWNKIPLIASTILTLMLSLGGLPPLSGFIPKWMIIQELTKNDMIVVPTLMAITALLNLYFYMRLTYSTALTMFPSANNMKMKWQFEHTKKMTLLPPLIITSTMLLPIMPMMSILD.

10 consecutive transmembrane segments (helical) span residues 3–23 (PPILIAILATVMTGTMIVMLS), 25–45 (HWLLIWIGFEMNMLAIIPILM), 66–86 (ASMLLMMGVTINLLYSGQWMI), 111–131 (FHFWVPEVTQGISLSSGMILL), 149–169 (INTDLMTLVALASVLVGGWGG), 178–198 (IMAYSSIAHMGWMAAIIIYNP), 201–221 (MFLNLSLYILMTLSTFMLFML), 237–257 (IPLIASTILTLMLSLGGLPPL), 274–294 (DMIVVPTLMAITALLNLYFYM), and 325–345 (LLPPLIITSTMLLPIMPMMSI).

It belongs to the complex I subunit 2 family. As to quaternary structure, core subunit of respiratory chain NADH dehydrogenase (Complex I) which is composed of 45 different subunits. Interacts with TMEM242.

The protein localises to the mitochondrion inner membrane. The enzyme catalyses a ubiquinone + NADH + 5 H(+)(in) = a ubiquinol + NAD(+) + 4 H(+)(out). In terms of biological role, core subunit of the mitochondrial membrane respiratory chain NADH dehydrogenase (Complex I) which catalyzes electron transfer from NADH through the respiratory chain, using ubiquinone as an electron acceptor. Essential for the catalytic activity and assembly of complex I. In Vulpes vulpes (Red fox), this protein is NADH-ubiquinone oxidoreductase chain 2.